The sequence spans 690 residues: Cyclic nucleotide-gated channel alpha-1 (690 aa).

The Cytoplasmic portion of the chain corresponds to 1-163 (MKKVIINTWH…VVIDPSGNTY (163 aa)). Disordered regions lie at residues 33-76 (GACS…PSQR) and 88-151 (NVNN…EEKK). Over residues 40–54 (GDDDDSASMFEESET) the composition is skewed to acidic residues. Over residues 64–76 (RSNTHGSGQPSQR) the composition is skewed to polar residues. The span at 111–151 (SKPDDKNENKKDPEKKKKKEKDKDKKKKEEKGKDKKEEEKK) shows a compositional bias: basic and acidic residues. A helical transmembrane segment spans residues 164-185 (YNWLFCITLPVMYNWTMIIARA). The Extracellular segment spans residues 186 to 195 (CFDELQSDYL). The chain crosses the membrane as a helical span at residues 196-215 (EYWLAFDYLSDVVYLLDMFV). Residues 216–241 (RTRTGYLEQGLLVKEERKLIDKYKST) are Cytoplasmic-facing. The chain crosses the membrane as a helical span at residues 242 to 251 (FQFKLDVLSV). Topologically, residues 252–264 (IPTDLLYIKFGWN) are extracellular. The chain crosses the membrane as a helical span at residues 265–283 (YPEIRLNRLLRISRMFEFF). Residues 284–291 (QRTETRTN) lie on the Cytoplasmic side of the membrane. The chain crosses the membrane as a helical span at residues 292 to 315 (YPNIFRISNLVMYIIIIIHWNACV). An ion conduction pathway region spans residues 293 to 402 (PNIFRISNLV…NIGSMISNMN (110 aa)). Residues 316-342 (YFSISKAIGFGNDTWVYPDVNDPDFGR) are Extracellular-facing. N-linked (GlcNAc...) asparagine glycosylation occurs at Asn327. A run of 2 helical transmembrane segments spans residues 343–373 (LARK…DSEY) and 374–399 (FFVV…SMIS). Residues 360–363 (TIGE) form a selectivity filter region. Topologically, residues 400–690 (NMNAARAEFQ…ESGPTDSTQD (291 aa)) are cytoplasmic. The segment at 403-479 (AARAEFQARI…DTLKKVRIFA (77 aa)) is C-linker. Residues 482-603 (EAGLLVELVL…EEKGKQILMK (122 aa)) are cyclic nucleotide-binding domain (CNBD). Gly543, Ser546, Arg559, and Thr560 together coordinate 3',5'-cyclic GMP. The 3',5'-cyclic AMP site is built by Arg559 and Thr560. Residues 621 to 664 (LEEKVTRMESSVDLLQTRFARILAEYESMQQKLKQRLTKVEKFL) are a coiled coil.

The protein belongs to the cyclic nucleotide-gated cation channel (TC 1.A.1.5) family. CNGA1 subfamily. Forms a heterotetramer with CNGB1 in a 3:1 ratio. May also form cyclic nucleotide-activated homotetrameric channels, that are efficiently activated by saturating cGMP, but poorly activated by saturating cAMP compared to the heterotetramer with CNGB1. The channel binds Ca(2+)-bound CALM1 via CaM1 and CaM2 regions of the CNGB1 subunit; this interaction modulates the affinity of the channel for cNMPs in response to intracellular Ca(2+) levels. In terms of tissue distribution, expressed in the retina, in rod cells (at protein level).

The protein localises to the cell membrane. The enzyme catalyses Ca(2+)(in) = Ca(2+)(out). It catalyses the reaction Na(+)(in) = Na(+)(out). The catalysed reaction is K(+)(in) = K(+)(out). It carries out the reaction NH4(+)(in) = NH4(+)(out). The enzyme catalyses Rb(+)(in) = Rb(+)(out). It catalyses the reaction Li(+)(in) = Li(+)(out). The catalysed reaction is Cs(+)(in) = Cs(+)(out). Pore-forming subunit of the rod cyclic nucleotide-gated channel. Mediates rod photoresponses at dim light converting transient changes in intracellular cGMP levels into electrical signals. In the dark, cGMP levels are high and keep the channel open enabling a steady inward current carried by Na(+) and Ca(2+) ions that leads to membrane depolarization and neurotransmitter release from synaptic terminals. Upon photon absorption cGMP levels decline leading to channel closure and membrane hyperpolarization that ultimately slows neurotransmitter release and signals the presence of light, the end point of the phototransduction cascade. Conducts cGMP- and cAMP-gated ion currents, with permeability for monovalent and divalent cations. The selectivity for Ca(2+) over Na(+) increases with cGMP concentrations, whereas the selectivity among monovalent ions is independent of the cGMP levels. The protein is Cyclic nucleotide-gated channel alpha-1 of Bos taurus (Bovine).